Reading from the N-terminus, the 953-residue chain is UvrABC system protein A (953 aa).

33 to 40 (GLSGSGKS) provides a ligand contact to ATP. ABC transporter domains are found at residues 320 to 599 (WGST…EESI) and 619 to 949 (GHDN…RYLK). Residue 652-659 (GVSGSGKS) participates in ATP binding. The segment at 752-778 (CEACQGDGLIKIEMHFLPDVYVKCDIC) adopts a C4-type zinc-finger fold.

The protein belongs to the ABC transporter superfamily. UvrA family. Forms a heterotetramer with UvrB during the search for lesions.

It localises to the cytoplasm. In terms of biological role, the UvrABC repair system catalyzes the recognition and processing of DNA lesions. UvrA is an ATPase and a DNA-binding protein. A damage recognition complex composed of 2 UvrA and 2 UvrB subunits scans DNA for abnormalities. When the presence of a lesion has been verified by UvrB, the UvrA molecules dissociate. In Rickettsia prowazekii (strain Madrid E), this protein is UvrABC system protein A.